The chain runs to 122 residues: Large ribosomal subunit protein uL14 (122 aa).

It belongs to the universal ribosomal protein uL14 family. As to quaternary structure, part of the 50S ribosomal subunit. Forms a cluster with proteins L3 and L19. In the 70S ribosome, L14 and L19 interact and together make contacts with the 16S rRNA in bridges B5 and B8.

In terms of biological role, binds to 23S rRNA. Forms part of two intersubunit bridges in the 70S ribosome. The protein is Large ribosomal subunit protein uL14 of Hydrogenovibrio crunogenus (strain DSM 25203 / XCL-2) (Thiomicrospira crunogena).